Here is a 204-residue protein sequence, read N- to C-terminus: tRNA (guanine-N(7)-)-methyltransferase (204 aa).

The S-adenosyl-L-methionine site is built by glutamate 36, glutamate 61, and aspartate 111. Aspartate 111 is a catalytic residue. Substrate-binding positions include lysine 115, aspartate 147, and 177 to 180; that span reads TRFE.

The protein belongs to the class I-like SAM-binding methyltransferase superfamily. TrmB family.

The catalysed reaction is guanosine(46) in tRNA + S-adenosyl-L-methionine = N(7)-methylguanosine(46) in tRNA + S-adenosyl-L-homocysteine. The protein operates within tRNA modification; N(7)-methylguanine-tRNA biosynthesis. Functionally, catalyzes the formation of N(7)-methylguanine at position 46 (m7G46) in tRNA. This Chlorobium phaeobacteroides (strain DSM 266 / SMG 266 / 2430) protein is tRNA (guanine-N(7)-)-methyltransferase.